A 306-amino-acid polypeptide reads, in one-letter code: Glutaminase (306 aa).

Residues Ser-64, Asn-115, Glu-159, Asn-166, Tyr-190, Tyr-242, and Val-260 each contribute to the substrate site.

This sequence belongs to the glutaminase family. As to quaternary structure, homotetramer.

The catalysed reaction is L-glutamine + H2O = L-glutamate + NH4(+). This chain is Glutaminase, found in Vibrio atlanticus (strain LGP32) (Vibrio splendidus (strain Mel32)).